The primary structure comprises 398 residues: Elongation factor Tu (398 aa).

The 198-residue stretch at 10–207 (KPHVNIGTIG…TVDSYIPEPE (198 aa)) folds into the tr-type G domain. The tract at residues 19 to 26 (GHVDHGKT) is G1. 19–26 (GHVDHGKT) is a binding site for GTP. Thr-26 is a binding site for Mg(2+). The interval 63 to 67 (GITIN) is G2. The tract at residues 84 to 87 (DAPG) is G3. GTP contacts are provided by residues 84-88 (DAPGH) and 139-142 (NKVD). The G4 stretch occupies residues 139–142 (NKVD). The interval 177 to 179 (SAL) is G5.

Belongs to the TRAFAC class translation factor GTPase superfamily. Classic translation factor GTPase family. EF-Tu/EF-1A subfamily. In terms of assembly, monomer.

The protein resides in the cytoplasm. It carries out the reaction GTP + H2O = GDP + phosphate + H(+). Its function is as follows. GTP hydrolase that promotes the GTP-dependent binding of aminoacyl-tRNA to the A-site of ribosomes during protein biosynthesis. This is Elongation factor Tu from Streptococcus pyogenes serotype M1.